A 515-amino-acid chain; its full sequence is 2-isopropylmalate synthase (515 aa).

The Pyruvate carboxyltransferase domain occupies 5–268; that stretch reads VIIFDTTLRD…VCGIDATQIV (264 aa). Mn(2+)-binding residues include aspartate 14, histidine 202, histidine 204, and asparagine 239. The segment at 394–515 is regulatory domain; it reads KFISLSQHSE…QAKLNAQMTP (122 aa).

This sequence belongs to the alpha-IPM synthase/homocitrate synthase family. LeuA type 1 subfamily. Homodimer. Mn(2+) is required as a cofactor.

It is found in the cytoplasm. It catalyses the reaction 3-methyl-2-oxobutanoate + acetyl-CoA + H2O = (2S)-2-isopropylmalate + CoA + H(+). It functions in the pathway amino-acid biosynthesis; L-leucine biosynthesis; L-leucine from 3-methyl-2-oxobutanoate: step 1/4. Its function is as follows. Catalyzes the condensation of the acetyl group of acetyl-CoA with 3-methyl-2-oxobutanoate (2-ketoisovalerate) to form 3-carboxy-3-hydroxy-4-methylpentanoate (2-isopropylmalate). In Polynucleobacter necessarius subsp. necessarius (strain STIR1), this protein is 2-isopropylmalate synthase.